The chain runs to 319 residues: Probable metallo-hydrolase YqjP (319 aa).

Residues histidine 67, histidine 69, aspartate 71, histidine 72, histidine 165, aspartate 184, and histidine 231 each coordinate Zn(2+).

The protein belongs to the metallo-beta-lactamase superfamily. The cofactor is Zn(2+).

This chain is Probable metallo-hydrolase YqjP (yqjP), found in Bacillus subtilis (strain 168).